Consider the following 141-residue polypeptide: MSEDSEVVLQLPSAPVGAGGESLPELSPETATPEPPSSAAVSPGTEEPPGDTKKKIDILLKAVGDTPIMKTKKWAVERTRTIQGLIDFIKKFLKLVASEQLFIYVNQSFAPSPDQEVGTLYECFGSDGKLVLHYCKSQAWG.

The interval Met-1–Lys-53 is disordered. Positions Leu-23–Ala-40 are enriched in low complexity. Gly-141 participates in a covalent cross-link: Glycyl lysine isopeptide (Gly-Lys) (interchain with K-? in acceptor protein).

The protein belongs to the ATG12 family. In terms of assembly, forms a conjugate with ATG5. Part of the minor complex composed of 4 sets of ATG12-ATG5 and ATG16L1 (400 kDa); this complex interacts with ATG3 leading to disruption of ATG7 interaction and promotion of ATG8-like proteins lipidation. Forms an 800-kDa complex composed of ATG12-ATG5 and ATG16L2. Interacts with DHX58/RIG-1, IFIH1/MDA5 and MAVS/IPS-1 in monomeric form as well as in ATG12-ATG5 conjugate. The interaction with MAVS is further enhanced upon vesicular stomatitis virus (VSV) infection. Interacts with ATG3; this interaction is essential for phosphatidylethanolamine (PE)-conjugated ATG8-like proteins formation. Interacts with ATG7. Interacts with ATG10. The ATG12-ATG5 conjugate interacts with RAB33A; this interaction is bridged by ATG16L1 and promotes ATG12-ATG5-ATG16L1 complex recruitment to phagophores. Interacts with TECPR1. Interacts with SH3BGRL. The ATG12-ATG5 conjugate interacts with PDCD6IP (via the BRO1 domain); this interaction is bridged by ATG12 and promotes multiple PDCD6IP-mediated functions such as endolysosomal trafficking, macroautophagy and exosome biogenesis. Post-translationally, acetylated by EP300. As to expression, ubiquitous.

The protein resides in the cytoplasm. Its subcellular location is the preautophagosomal structure membrane. In terms of biological role, ubiquitin-like protein involved in autophagy vesicles formation. Conjugation with ATG5 through a ubiquitin-like conjugating system involving also ATG7 as an E1-like activating enzyme and ATG10 as an E2-like conjugating enzyme, is essential for its function. The ATG12-ATG5 conjugate acts as an E3-like enzyme which is required for lipidation of ATG8 family proteins and their association to the vesicle membranes. As part of the ATG8 conjugation system with ATG5 and ATG16L1, required for recruitment of LRRK2 to stressed lysosomes and induction of LRRK2 kinase activity in response to lysosomal stress. (Microbial infection) May act as a proviral factor. In association with ATG5, negatively regulates the innate antiviral immune response by impairing the type I IFN production pathway upon vesicular stomatitis virus (VSV) infection. In Mus musculus (Mouse), this protein is Ubiquitin-like protein ATG12.